The sequence spans 777 residues: Degenerin unc-8 (777 aa).

Residues 1 to 128 (MSPLLTWNLI…VATSSFFGRY (128 aa)) lie on the Cytoplasmic side of the membrane. Residues 129–149 (VWAALFMCMLMAFLLQTYWTM) form a helical membrane-spanning segment. Topologically, residues 150-689 (SEYLQYRTII…KETAGYTLVN (540 aa)) are extracellular. 7 N-linked (GlcNAc...) asparagine glycosylation sites follow: Asn274, Asn319, Asn357, Asn411, Asn453, Asn533, and Asn597. Residues 690–710 (LFSDFGGNIGLWIGFSVITFA) traverse the membrane as a helical segment. The Cytoplasmic segment spans residues 711–777 (EFAELFCEIC…NESTKELMSK (67 aa)). The interval 752-777 (QRSPKKSQPGEDEVSTNESTKELMSK) is disordered.

It belongs to the amiloride-sensitive sodium channel (TC 1.A.6) family.

It localises to the membrane. Its function is as follows. Sodium permeable non-voltage-sensitive ion channel. Involved in the activity-dependent removal of selected presynaptic proteins, such as synaptobrevin snb-1, and Ras-related rab-3, in the remodeling of GABAergic motor neurons. This chain is Degenerin unc-8, found in Caenorhabditis elegans.